Reading from the N-terminus, the 230-residue chain is UPF0494 membrane protein C1348.07 (230 aa).

The next 3 helical transmembrane spans lie at 78–98, 120–140, and 148–168; these read WPLL…NFEV, IWGP…GLIY, and AIPL…VAMV.

The protein belongs to the UPF0494 family.

Its subcellular location is the vacuole. It localises to the membrane. This is UPF0494 membrane protein C1348.07 from Schizosaccharomyces pombe (strain 972 / ATCC 24843) (Fission yeast).